Here is a 216-residue protein sequence, read N- to C-terminus: Acetate CoA-transferase subunit beta (216 aa).

The active site involves E46.

This sequence belongs to the 3-oxoacid CoA-transferase subunit B family. In terms of assembly, heterotetramer composed of two alpha subunits (AtoD) and two beta subunits (AtoA).

The protein resides in the cytoplasm. It carries out the reaction an acyl-CoA + acetate = a carboxylate + acetyl-CoA. The catalysed reaction is acetoacetate + acetyl-CoA = acetoacetyl-CoA + acetate. It catalyses the reaction butanoate + acetyl-CoA = butanoyl-CoA + acetate. The enzyme catalyses acetoacetate + butanoyl-CoA = acetoacetyl-CoA + butanoate. The protein operates within lipid metabolism; short-chain fatty acid metabolism. Its activity is regulated as follows. Inhibited by p-chloromercuribenzoate. Coenzyme A transferase which is involved in short-chain fatty acid degradation and catalyzes the activation of short-chain fatty acids to their respective CoA thiolesters. During acetoacetate degradation, catalyzes the transfer of CoA from acetyl-CoA to acetoacetate by a mechanism involving a covalent enzyme-CoA compound as a reaction intermediate. Utilizes a variety of short chain acyl-CoA and carboxylic acid substrates but exhibits maximal activity with normal and 3-keto substrates. This Escherichia coli (strain K12) protein is Acetate CoA-transferase subunit beta.